Consider the following 377-residue polypeptide: MKNNIITLTQSLIQRPSISPDDQGCQQLIAERLQAVGFKLEWLPFGDTLNLWATHGEGKCIAFAGHTDVVPIGNESQWTYPPFEARIVENMLYGRGAADMKGALAAMVIAAETFVKHLPNHQGKIALLITSDEEAAATNGTVKVVETLIKRNEKIDYCVVGEPSSATQFGDIIKNGRRGSITGNLYIQGVQGHVAYPHLADNPVHNALKFLDELTHYQWDKGNEFFPPTSLQIANIHAGTGSNNVIPGELYVQFNLRYCTEVTDEIIKTKVAEMLEKHKLTYRIDWNLSGKPFLTPQGKLVNATIEAVKKFTQIRPHLDTGGGTSDARFIATMGAEVVEFGPLNQTIHKVNECVNIDDLAKCGEIYYYILEKLFNEQ.

Residue His66 coordinates Zn(2+). Asp68 is an active-site residue. Asp99 lines the Zn(2+) pocket. Glu133 functions as the Proton acceptor in the catalytic mechanism. Zn(2+) contacts are provided by Glu134, Glu162, and His348.

Belongs to the peptidase M20A family. DapE subfamily. Homodimer. The cofactor is Zn(2+). Co(2+) serves as cofactor.

The enzyme catalyses N-succinyl-(2S,6S)-2,6-diaminopimelate + H2O = (2S,6S)-2,6-diaminopimelate + succinate. Its pathway is amino-acid biosynthesis; L-lysine biosynthesis via DAP pathway; LL-2,6-diaminopimelate from (S)-tetrahydrodipicolinate (succinylase route): step 3/3. Catalyzes the hydrolysis of N-succinyl-L,L-diaminopimelic acid (SDAP), forming succinate and LL-2,6-diaminopimelate (DAP), an intermediate involved in the bacterial biosynthesis of lysine and meso-diaminopimelic acid, an essential component of bacterial cell walls. This chain is Succinyl-diaminopimelate desuccinylase, found in Histophilus somni (strain 2336) (Haemophilus somnus).